A 628-amino-acid polypeptide reads, in one-letter code: DNA-directed RNA polymerase subunit beta' (628 aa).

Zn(2+)-binding residues include cysteine 70, cysteine 72, cysteine 85, and cysteine 88. 3 residues coordinate Mg(2+): aspartate 472, aspartate 474, and aspartate 476.

Belongs to the RNA polymerase beta' chain family. RpoC1 subfamily. In plastids the minimal PEP RNA polymerase catalytic core is composed of four subunits: alpha, beta, beta', and beta''. When a (nuclear-encoded) sigma factor is associated with the core the holoenzyme is formed, which can initiate transcription. The cofactor is Mg(2+). Zn(2+) serves as cofactor.

It localises to the plastid. The protein localises to the chloroplast. It carries out the reaction RNA(n) + a ribonucleoside 5'-triphosphate = RNA(n+1) + diphosphate. In terms of biological role, DNA-dependent RNA polymerase catalyzes the transcription of DNA into RNA using the four ribonucleoside triphosphates as substrates. This is DNA-directed RNA polymerase subunit beta' from Gracilaria tenuistipitata var. liui (Red alga).